The primary structure comprises 229 residues: uncharacterized protein (229 aa).

Positions 1–17 (MKKIIALMLFLTFFAHA) are cleaved as a signal peptide.

This is an uncharacterized protein from Escherichia coli O157:H7.